Consider the following 174-residue polypeptide: Protein-lysine myristoyltransferase HlyC (174 aa).

Catalysis depends on residues histidine 23 and aspartate 92. Histidine 151 lines the heme pocket.

Belongs to the RTX toxin acyltransferase family. Monomer. In terms of processing, proteolytically cleaved by the protease systems ClpAP, ClpXP and FtsH, leading to its degradation.

The protein localises to the cytoplasm. The enzyme catalyses tetradecanoyl-[ACP] + L-lysyl-[protein] = N(6)-tetradecanoyl-L-lysyl-[protein] + holo-[ACP] + H(+). Its activity is regulated as follows. The acyltransferase activity is inhibited by heme. Its function is as follows. Protein-lysine myristoyltransferase that catalyzes myristoylation of the protoxin (HlyA) at two internal lysine residues, thereby converting it to the active toxin. This is Protein-lysine myristoyltransferase HlyC from Escherichia coli.